The following is a 102-amino-acid chain: Acylphosphatase 1 (102 aa).

One can recognise an Acylphosphatase-like domain in the interval 12–100 (TRLVRVRGRV…PRFDRFEQLP (89 aa)). Residues arginine 27 and asparagine 45 contribute to the active site.

The protein belongs to the acylphosphatase family.

It carries out the reaction an acyl phosphate + H2O = a carboxylate + phosphate + H(+). The protein is Acylphosphatase 1 (acyP1) of Ralstonia nicotianae (strain ATCC BAA-1114 / GMI1000) (Ralstonia solanacearum).